The following is a 332-amino-acid chain: Glycerol-3-phosphate dehydrogenase [NAD(P)+] (332 aa).

The NADPH site is built by Trp11, Arg30, and Lys108. Positions 108, 137, and 139 each coordinate sn-glycerol 3-phosphate. NADPH is bound at residue Ala141. Sn-glycerol 3-phosphate contacts are provided by Lys192, Asp245, Ser255, Arg256, and Asn257. Lys192 (proton acceptor) is an active-site residue. Arg256 serves as a coordination point for NADPH. Residues Val280 and Glu282 each contribute to the NADPH site.

This sequence belongs to the NAD-dependent glycerol-3-phosphate dehydrogenase family.

Its subcellular location is the cytoplasm. It catalyses the reaction sn-glycerol 3-phosphate + NAD(+) = dihydroxyacetone phosphate + NADH + H(+). The catalysed reaction is sn-glycerol 3-phosphate + NADP(+) = dihydroxyacetone phosphate + NADPH + H(+). It participates in membrane lipid metabolism; glycerophospholipid metabolism. In terms of biological role, catalyzes the reduction of the glycolytic intermediate dihydroxyacetone phosphate (DHAP) to sn-glycerol 3-phosphate (G3P), the key precursor for phospholipid synthesis. In Burkholderia thailandensis (strain ATCC 700388 / DSM 13276 / CCUG 48851 / CIP 106301 / E264), this protein is Glycerol-3-phosphate dehydrogenase [NAD(P)+].